Here is a 208-residue protein sequence, read N- to C-terminus: Large ribosomal subunit protein uL4 (208 aa).

The interval 45–83 (RQGTHKSKTRAEVRGGGRKPYRQKGTGNARQGSTRSPLM) is disordered. A compositionally biased stretch (polar residues) spans 69-80 (GTGNARQGSTRS).

This sequence belongs to the universal ribosomal protein uL4 family. Part of the 50S ribosomal subunit.

Functionally, one of the primary rRNA binding proteins, this protein initially binds near the 5'-end of the 23S rRNA. It is important during the early stages of 50S assembly. It makes multiple contacts with different domains of the 23S rRNA in the assembled 50S subunit and ribosome. Forms part of the polypeptide exit tunnel. The chain is Large ribosomal subunit protein uL4 from Chlorobium luteolum (strain DSM 273 / BCRC 81028 / 2530) (Pelodictyon luteolum).